Here is a 60-residue protein sequence, read N- to C-terminus: MAGTLKITLKKGLAGRDQRIIATLKSLGLTKLNKTVERPDNPAVRGMIARVAHMVEVQEG.

The protein belongs to the universal ribosomal protein uL30 family. In terms of assembly, part of the 50S ribosomal subunit.

This chain is Large ribosomal subunit protein uL30, found in Symbiobacterium thermophilum (strain DSM 24528 / JCM 14929 / IAM 14863 / T).